Consider the following 172-residue polypeptide: Thioredoxin M5, chloroplastic (172 aa).

Residues 1 to 59 constitute a chloroplast transit peptide; it reads MALETCFRAWATLHAPQPPSSGGSRDRLLLSGAGSSQSKPRLSVASPSPLRPASRFACQ. Residues 17–47 form a disordered region; it reads QPPSSGGSRDRLLLSGAGSSQSKPRLSVASP. In terms of domain architecture, Thioredoxin spans 60–171; it reads CSNVVDEVVV…LATIIDKYVS (112 aa). Residues C95 and C98 each act as nucleophile in the active site. C95 and C98 are oxidised to a cystine.

This sequence belongs to the thioredoxin family. Plant M-type subfamily. As to expression, expressed in leaves and at lower levels in flowers.

Its subcellular location is the plastid. The protein localises to the chloroplast. Its function is as follows. Thiol-disulfide oxidoreductase probably involved in the redox regulation of chloroplastic enzymes. Required for chloroplast biogenesis and differentiation. Functions as an electron donor for plastidial 2-Cys peroxiredoxins and participates in hydrogen peroxide scavenging system in chloroplasts. Possesses reducing activity towards insulin disulfide bonds. The sequence is that of Thioredoxin M5, chloroplastic (TRXM) from Oryza sativa subsp. japonica (Rice).